Consider the following 496-residue polypeptide: Steroid 21-hydroxylase (496 aa).

A heme b-binding site is contributed by Ser109. Arg232 lines the 17alpha-hydroxyprogesterone pocket. Position 232 (Arg232) interacts with progesterone. Residues His364, Arg425, and Cys427 each contribute to the heme b site.

Belongs to the cytochrome P450 family. Heme b serves as cofactor.

The protein localises to the endoplasmic reticulum membrane. Its subcellular location is the microsome membrane. It carries out the reaction progesterone + reduced [NADPH--hemoprotein reductase] + O2 = 21-hydroxyprogesterone + oxidized [NADPH--hemoprotein reductase] + H2O + H(+). It catalyses the reaction 17alpha-hydroxyprogesterone + reduced [NADPH--hemoprotein reductase] + O2 = 11-deoxycortisol + oxidized [NADPH--hemoprotein reductase] + H2O + H(+). A cytochrome P450 monooxygenase that plays a major role in adrenal steroidogenesis. Catalyzes the hydroxylation at C-21 of progesterone and 17alpha-hydroxyprogesterone to respectively form 11-deoxycorticosterone and 11-deoxycortisol, intermediate metabolites in the biosynthetic pathway of mineralocorticoids and glucocorticoids. Mechanistically, uses molecular oxygen inserting one oxygen atom into a substrate, and reducing the second into a water molecule, with two electrons provided by NADPH via cytochrome P450 reductase (CPR; NADPH-ferrihemoprotein reductase). The protein is Steroid 21-hydroxylase (CYP21) of Bos taurus (Bovine).